The sequence spans 29 residues: Cyclotide psyleio A (29 aa).

Residues 1-29 (GLPICGETCFTGTCNTPGCSCTYPICTRD) constitute a cross-link (cyclopeptide (Gly-Asp)). Cystine bridges form between Cys-5–Cys-19, Cys-9–Cys-21, and Cys-14–Cys-26.

Post-translationally, this is a cyclic peptide.

Its function is as follows. Probably participates in a plant defense mechanism. In Psychotria brachyceras, this protein is Cyclotide psyleio A.